The primary structure comprises 540 residues: Keratin, type II cytoskeletal 73 (540 aa).

The interval 1-131 is head; sequence MSRQFTYKSG…DPEIQKVCAQ (131 aa). The tract at residues 132 to 167 is coil 1A; it reads EREQIKALNNKFASFIDKVRFLEQQNQVLGTKWELL. Residues 132 to 445 form the IF rod domain; the sequence is EREQIKALNN…KLLEGEECRM (314 aa). Residues 168-186 form a linker 1 region; that stretch reads QQQDLDNCKNNLEPILEGY. Residues 187–278 are coil 1B; that stretch reads ISNLRKQLEM…CLYEGEIAQM (92 aa). The linker 12 stretch occupies residues 279–302; that stretch reads QSHISDTSVILSMDNNRNLDLNSI. The interval 303–441 is coil 2; sequence IAEVRAQYED…ATYRKLLEGE (139 aa). The tract at residues 442–540 is tail; that stretch reads ECRMSGEYTN…LSSPTKKTPR (99 aa). Residues 509–540 are disordered; it reads GEAKTRLGSTSEIKDLLGKTPALSSPTKKTPR. Residues 530–540 are compositionally biased toward polar residues; that stretch reads ALSSPTKKTPR.

This sequence belongs to the intermediate filament family. Heterotetramer of two type I and two type II keratins.

Its function is as follows. Has a role in hair formation. Specific component of keratin intermediate filaments in the inner root sheath (IRS) of the hair follicle. The chain is Keratin, type II cytoskeletal 73 (KRT73) from Bos taurus (Bovine).